Reading from the N-terminus, the 582-residue chain is Aspartate--tRNA(Asp/Asn) ligase (582 aa).

Glutamate 177 is a binding site for L-aspartate. The tract at residues 201–204 is aspartate; that stretch reads QLFK. Arginine 223 serves as a coordination point for L-aspartate. ATP is bound by residues 223 to 225 and glutamine 232; that span reads RDE. L-aspartate is bound at residue histidine 447. An ATP-binding site is contributed by glutamate 481. Arginine 488 contacts L-aspartate. 533-536 contributes to the ATP binding site; the sequence is GLDR.

This sequence belongs to the class-II aminoacyl-tRNA synthetase family. Type 1 subfamily. Homodimer.

Its subcellular location is the cytoplasm. The catalysed reaction is tRNA(Asx) + L-aspartate + ATP = L-aspartyl-tRNA(Asx) + AMP + diphosphate. Functionally, aspartyl-tRNA synthetase with relaxed tRNA specificity since it is able to aspartylate not only its cognate tRNA(Asp) but also tRNA(Asn). Reaction proceeds in two steps: L-aspartate is first activated by ATP to form Asp-AMP and then transferred to the acceptor end of tRNA(Asp/Asn). The sequence is that of Aspartate--tRNA(Asp/Asn) ligase from Chlamydia trachomatis serovar A (strain ATCC VR-571B / DSM 19440 / HAR-13).